Here is a 418-residue protein sequence, read N- to C-terminus: Tyrosine--tRNA ligase (418 aa).

Residue tyrosine 34 participates in L-tyrosine binding. Positions 39–48 (PTADSLHLGH) match the 'HIGH' region motif. L-tyrosine is bound by residues tyrosine 169 and glutamine 173. A 'KMSKS' region motif is present at residues 229 to 233 (KFGKS). Lysine 232 provides a ligand contact to ATP. The 67-residue stretch at 352–418 (NNIVELLVSS…GKKKYFVLTY (67 aa)) folds into the S4 RNA-binding domain.

The protein belongs to the class-I aminoacyl-tRNA synthetase family. TyrS type 1 subfamily. As to quaternary structure, homodimer.

It is found in the cytoplasm. The catalysed reaction is tRNA(Tyr) + L-tyrosine + ATP = L-tyrosyl-tRNA(Tyr) + AMP + diphosphate + H(+). Catalyzes the attachment of tyrosine to tRNA(Tyr) in a two-step reaction: tyrosine is first activated by ATP to form Tyr-AMP and then transferred to the acceptor end of tRNA(Tyr). The polypeptide is Tyrosine--tRNA ligase (Streptococcus pneumoniae (strain 70585)).